We begin with the raw amino-acid sequence, 185 residues long: Elongation factor P (185 aa).

The protein belongs to the elongation factor P family.

The protein resides in the cytoplasm. The protein operates within protein biosynthesis; polypeptide chain elongation. Involved in peptide bond synthesis. Stimulates efficient translation and peptide-bond synthesis on native or reconstituted 70S ribosomes in vitro. Probably functions indirectly by altering the affinity of the ribosome for aminoacyl-tRNA, thus increasing their reactivity as acceptors for peptidyl transferase. The sequence is that of Elongation factor P from Bacillus cytotoxicus (strain DSM 22905 / CIP 110041 / 391-98 / NVH 391-98).